The sequence spans 502 residues: Sodium/proline symporter (502 aa).

A run of 13 helical transmembrane segments spans residues 6–26 (PMLV…FIAW), 42–62 (LGPF…WLLM), 68–88 (IFLS…GAWI), 127–147 (IISA…GIVA), 163–183 (ALWA…FLAV), 192–212 (SLMI…VGGF), 235–255 (FVAI…PHIL), 276–296 (TWMI…IAYF), 320–340 (ILFN…AVMS), 371–391 (LVWV…ALAA), 398–418 (LGLV…VVLF), 430–450 (ALAG…YGWL), and 452–472 (LYEI…FSLL).

Belongs to the sodium:solute symporter (SSF) (TC 2.A.21) family.

It is found in the cell inner membrane. It catalyses the reaction L-proline(in) + Na(+)(in) = L-proline(out) + Na(+)(out). Its function is as follows. Catalyzes the sodium-dependent uptake of extracellular L-proline. The polypeptide is Sodium/proline symporter (Salmonella typhimurium (strain LT2 / SGSC1412 / ATCC 700720)).